Reading from the N-terminus, the 550-residue chain is Gag-Pol polyprotein (550 aa).

Gly2 carries the N-myristoyl glycine; by host lipid modification. Positions 7–31 (VLSGGELDRWEKIRLRPGGKKQYRL) are interaction with Gp41. Residues 8–43 (LSGGELDRWEKIRLRPGGKKQYRLKHIVWASRKLER) form an interaction with host CALM1 region. Positions 12–19 (ELDRWEKI) are interaction with host AP3D1. Residues 14–33 (DRWEKIRLRPGGKKQYRLKH) are interaction with membrane phosphatidylinositol 4,5-bisphosphate and RNA. The Nuclear export signal signature appears at 16-22 (WEKIRLR). The Nuclear localization signal motif lies at 26–32 (KKQYRLK). The interval 73-77 (EELRS) is interaction with membrane phosphatidylinositol 4,5-bisphosphate. The interval 106–128 (EEQNKSKKKAQQAAADTGNSSQV) is disordered. Position 132 is a phosphotyrosine; by host (Tyr132). Positions 189-227 (NTVGGHQAAMQMLKETINEEAAEWDRLHPVHAGPIAPGQ) are interaction with human PPIA/CYPA and NUP153. A dimerization/Multimerization of capsid protein p24 region spans residues 277 to 363 (YSPISILDIR…GGPGHKARVL (87 aa)). 2 consecutive CCHC-type zinc fingers follow at residues 390–407 (VKCF…NCKA) and 411–428 (KGCW…DCTE). Residues 444–464 (KAREFSSEQTRANSPTRGELQ) form a disordered region. Polar residues predominate over residues 450 to 459 (SEQTRANSPT). The tract at residues 489–493 (PQITL) is dimerization of protease. The region spanning 508–550 (KEALLDTGADDTVLEEINLPGRWKPKMIGGIGGFIKVRQYDEV) is the Peptidase A2 domain. Asp513 (for protease activity; shared with dimeric partner) is an active-site residue. A dimerization of protease region spans residues 537–543 (GIGGFIK).

Homotrimer; further assembles as hexamers of trimers. Interacts with gp41 (via C-terminus). Interacts with host CALM1; this interaction induces a conformational change in the Matrix protein, triggering exposure of the myristate group. Interacts with host AP3D1; this interaction allows the polyprotein trafficking to multivesicular bodies during virus assembly. Part of the pre-integration complex (PIC) which is composed of viral genome, matrix protein, Vpr and integrase. As to quaternary structure, homodimer; the homodimer further multimerizes as homohexamers or homopentamers. Interacts with human PPIA/CYPA; This interaction stabilizes the capsid. Interacts with human NUP153. Interacts with host PDZD8; this interaction stabilizes the capsid. Interacts with monkey TRIM5; this interaction destabilizes the capsid. In terms of assembly, homodimer, whose active site consists of two apposed aspartic acid residues. In terms of processing, specific enzymatic cleavages by the viral protease yield mature proteins. The protease is released by autocatalytic cleavage. The polyprotein is cleaved during and after budding, this process is termed maturation. Proteolytic cleavage of p66 RT removes the RNase H domain to yield the p51 RT subunit. Nucleocapsid protein p7 might be further cleaved after virus entry. Post-translationally, tyrosine phosphorylated presumably in the virion by a host kinase. Phosphorylation is apparently not a major regulator of membrane association. Phosphorylated possibly by host MAPK1; this phosphorylation is necessary for Pin1-mediated virion uncoating. In terms of processing, methylated by host PRMT6, impairing its function by reducing RNA annealing and the initiation of reverse transcription.

It is found in the host cell membrane. The protein resides in the host endosome. It localises to the host multivesicular body. Its subcellular location is the virion membrane. The protein localises to the host nucleus. It is found in the host cytoplasm. The protein resides in the virion. The catalysed reaction is Specific for a P1 residue that is hydrophobic, and P1' variable, but often Pro.. Its activity is regulated as follows. The viral protease is inhibited by many synthetic protease inhibitors (PIs), such as amprenavir, atazanavir, indinavir, loprinavir, nelfinavir, ritonavir and saquinavir. Use of protease inhibitors in tritherapy regimens permit more ambitious therapeutic strategies. Functionally, mediates, with Gag polyprotein, the essential events in virion assembly, including binding the plasma membrane, making the protein-protein interactions necessary to create spherical particles, recruiting the viral Env proteins, and packaging the genomic RNA via direct interactions with the RNA packaging sequence (Psi). Gag-Pol polyprotein may regulate its own translation, by the binding genomic RNA in the 5'-UTR. At low concentration, the polyprotein would promote translation, whereas at high concentration, the polyprotein would encapsidate genomic RNA and then shut off translation. Its function is as follows. Targets the polyprotein to the plasma membrane via a multipartite membrane-binding signal, that includes its myristoylated N-terminus. Matrix protein is part of the pre-integration complex. Implicated in the release from host cell mediated by Vpu. Binds to RNA. Forms the conical core that encapsulates the genomic RNA-nucleocapsid complex in the virion. Most core are conical, with only 7% tubular. The core is constituted by capsid protein hexamer subunits. The core is disassembled soon after virion entry. Host restriction factors such as TRIM5-alpha or TRIMCyp bind retroviral capsids and cause premature capsid disassembly, leading to blocks in reverse transcription. Capsid restriction by TRIM5 is one of the factors which restricts HIV-1 to the human species. Host PIN1 apparently facilitates the virion uncoating. On the other hand, interactions with PDZD8 or CYPA stabilize the capsid. In terms of biological role, encapsulates and protects viral dimeric unspliced genomic RNA (gRNA). Binds these RNAs through its zinc fingers. Acts as a nucleic acid chaperone which is involved in rearangement of nucleic acid secondary structure during gRNA retrotranscription. Also facilitates template switch leading to recombination. As part of the polyprotein, participates in gRNA dimerization, packaging, tRNA incorporation and virion assembly. Functionally, aspartyl protease that mediates proteolytic cleavages of Gag and Gag-Pol polyproteins during or shortly after the release of the virion from the plasma membrane. Cleavages take place as an ordered, step-wise cascade to yield mature proteins. This process is called maturation. Displays maximal activity during the budding process just prior to particle release from the cell. Also cleaves Nef and Vif, probably concomitantly with viral structural proteins on maturation of virus particles. Hydrolyzes host EIF4GI and PABP1 in order to shut off the capped cellular mRNA translation. The resulting inhibition of cellular protein synthesis serves to ensure maximal viral gene expression and to evade host immune response. Also mediates cleavage of host YTHDF3. Mediates cleavage of host CARD8, thereby activating the CARD8 inflammasome, leading to the clearance of latent HIV-1 in patient CD4(+) T-cells after viral reactivation; in contrast, HIV-1 can evade CARD8-sensing when its protease remains inactive in infected cells prior to viral budding. This Human immunodeficiency virus type 1 group M subtype B (isolate CDC-451) (HIV-1) protein is Gag-Pol polyprotein (gag-pol).